The following is a 314-amino-acid chain: Methionyl-tRNA formyltransferase (314 aa).

Residue 110–113 (SLLP) coordinates (6S)-5,6,7,8-tetrahydrofolate.

It belongs to the Fmt family.

The catalysed reaction is L-methionyl-tRNA(fMet) + (6R)-10-formyltetrahydrofolate = N-formyl-L-methionyl-tRNA(fMet) + (6S)-5,6,7,8-tetrahydrofolate + H(+). Attaches a formyl group to the free amino group of methionyl-tRNA(fMet). The formyl group appears to play a dual role in the initiator identity of N-formylmethionyl-tRNA by promoting its recognition by IF2 and preventing the misappropriation of this tRNA by the elongation apparatus. This is Methionyl-tRNA formyltransferase from Bacillus mycoides (strain KBAB4) (Bacillus weihenstephanensis).